The sequence spans 303 residues: Acetylglutamate kinase (303 aa).

Residues 69–70 (GG), Arg91, and Asn201 contribute to the substrate site.

Belongs to the acetylglutamate kinase family. ArgB subfamily.

The protein localises to the cytoplasm. The catalysed reaction is N-acetyl-L-glutamate + ATP = N-acetyl-L-glutamyl 5-phosphate + ADP. It functions in the pathway amino-acid biosynthesis; L-arginine biosynthesis; N(2)-acetyl-L-ornithine from L-glutamate: step 2/4. Functionally, catalyzes the ATP-dependent phosphorylation of N-acetyl-L-glutamate. In Novosphingobium aromaticivorans (strain ATCC 700278 / DSM 12444 / CCUG 56034 / CIP 105152 / NBRC 16084 / F199), this protein is Acetylglutamate kinase.